The sequence spans 669 residues: DNA ligase (669 aa).

NAD(+) is bound by residues 33–37, 82–83, and E115; these read DVTYD and SL. The active-site N6-AMP-lysine intermediate is the K117. NAD(+) is bound by residues R138, E172, K286, and K310. Zn(2+)-binding residues include C401, C404, C417, and C422. In terms of domain architecture, BRCT spans 589–669; that stretch reads VDSSFLFGKK…DIKNLVNLDD (81 aa).

It belongs to the NAD-dependent DNA ligase family. LigA subfamily. Mg(2+) serves as cofactor. Mn(2+) is required as a cofactor.

It carries out the reaction NAD(+) + (deoxyribonucleotide)n-3'-hydroxyl + 5'-phospho-(deoxyribonucleotide)m = (deoxyribonucleotide)n+m + AMP + beta-nicotinamide D-nucleotide.. Functionally, DNA ligase that catalyzes the formation of phosphodiester linkages between 5'-phosphoryl and 3'-hydroxyl groups in double-stranded DNA using NAD as a coenzyme and as the energy source for the reaction. It is essential for DNA replication and repair of damaged DNA. The sequence is that of DNA ligase from Borrelia duttonii (strain Ly).